We begin with the raw amino-acid sequence, 519 residues long: Chromobox protein homolog 2 (519 aa).

Residues Phe-12 to Arg-70 enclose the Chromo domain. Residues Lys-60–Asn-69 are compositionally biased toward basic and acidic residues. The tract at residues Lys-60–Pro-180 is disordered. The span at Arg-70–Thr-84 shows a compositional bias: basic residues. A DNA-binding region (a.T hook) is located at residues Arg-75–Ser-87. The segment covering Lys-103–Ser-119 has biased composition (low complexity). A compositionally biased stretch (basic and acidic residues) spans Leu-129–His-141. Glycyl lysine isopeptide (Lys-Gly) (interchain with G-Cter in SUMO2) cross-links involve residues Lys-147 and Lys-154. Positions Lys-164 to Pro-169 match the Nuclear localization signal motif. Arg-248 is subject to Asymmetric dimethylarginine; alternate. Arg-248 bears the Omega-N-methylarginine; alternate mark. 2 disordered regions span residues Gln-295–Thr-336 and Ala-367–Pro-464. Ser-303 is modified (phosphoserine). 2 stretches are compositionally biased toward polar residues: residues Gln-321–Thr-336 and Thr-384–Asn-395. The span at Ser-453–Pro-464 shows a compositional bias: low complexity.

In terms of assembly, component of a PRC1-like complex. The composition of the PRC1 complex may differ between the PRC1 complex in pluripotent embryonic stem cells containing RNF2, CBX7 and PCGF2, and the PRC1 complex in differentiating cells containing RNF2, CBX2, CBX4 and BMI1. Interacts with RING1/RNF2. Interacts (via chromodomain) with histone H3K9Me3 and H3K27me3. May interact with H3C15 and H3C1. Expressed in embryoid bodies.

It localises to the nucleus speckle. It is found in the chromosome. Its function is as follows. Component of a Polycomb group (PcG) multiprotein PRC1-like complex, a complex class required to maintain the transcriptionally repressive state of many genes, including Hox genes, throughout development. PcG PRC1 complex acts via chromatin remodeling and modification of histones; it mediates monoubiquitination of histone H2A 'Lys-119', rendering chromatin heritably changed in its expressibility. Binds to histone H3 trimethylated at 'Lys-9' (H3K9me3) or at 'Lys-27' (H3K27me3). Plays a role in the lineage differentiation of the germ layers in embryonic development. Involved in sexual development, acting as activator of NR5A1 expression. This Mus musculus (Mouse) protein is Chromobox protein homolog 2 (Cbx2).